A 267-amino-acid polypeptide reads, in one-letter code: 4-hydroxy-tetrahydrodipicolinate reductase (267 aa).

NAD(+) is bound by residues 12 to 17 (GARGRM), Asp38, 100 to 102 (GTT), and 126 to 129 (APNF). His156 (proton donor/acceptor) is an active-site residue. Residue His157 participates in (S)-2,3,4,5-tetrahydrodipicolinate binding. Lys160 functions as the Proton donor in the catalytic mechanism. 166–167 (GT) is a binding site for (S)-2,3,4,5-tetrahydrodipicolinate.

Belongs to the DapB family.

The protein localises to the cytoplasm. It carries out the reaction (S)-2,3,4,5-tetrahydrodipicolinate + NAD(+) + H2O = (2S,4S)-4-hydroxy-2,3,4,5-tetrahydrodipicolinate + NADH + H(+). It catalyses the reaction (S)-2,3,4,5-tetrahydrodipicolinate + NADP(+) + H2O = (2S,4S)-4-hydroxy-2,3,4,5-tetrahydrodipicolinate + NADPH + H(+). The protein operates within amino-acid biosynthesis; L-lysine biosynthesis via DAP pathway; (S)-tetrahydrodipicolinate from L-aspartate: step 4/4. In terms of biological role, catalyzes the conversion of 4-hydroxy-tetrahydrodipicolinate (HTPA) to tetrahydrodipicolinate. In Bacillus pumilus (strain SAFR-032), this protein is 4-hydroxy-tetrahydrodipicolinate reductase.